Reading from the N-terminus, the 183-residue chain is Protein Syd (183 aa).

Belongs to the Syd family.

Its subcellular location is the cell inner membrane. Its function is as follows. Interacts with the SecY protein in vivo. May bind preferentially to an uncomplexed state of SecY, thus functioning either as a chelating agent for excess SecY in the cell or as a regulatory factor that negatively controls the translocase function. This chain is Protein Syd, found in Yersinia pestis bv. Antiqua (strain Antiqua).